Consider the following 289-residue polypeptide: Diaminopimelate epimerase (289 aa).

Substrate is bound by residues N11 and N78. C87 acts as the Proton donor in catalysis. Substrate is bound by residues 88 to 89 (GN), N163, N199, and 217 to 218 (ER). C226 acts as the Proton acceptor in catalysis. Residue 227–228 (GT) participates in substrate binding.

It belongs to the diaminopimelate epimerase family. Homodimer.

It localises to the cytoplasm. The enzyme catalyses (2S,6S)-2,6-diaminopimelate = meso-2,6-diaminopimelate. Its pathway is amino-acid biosynthesis; L-lysine biosynthesis via DAP pathway; DL-2,6-diaminopimelate from LL-2,6-diaminopimelate: step 1/1. In terms of biological role, catalyzes the stereoinversion of LL-2,6-diaminopimelate (L,L-DAP) to meso-diaminopimelate (meso-DAP), a precursor of L-lysine and an essential component of the bacterial peptidoglycan. The sequence is that of Diaminopimelate epimerase from Mycolicibacterium vanbaalenii (strain DSM 7251 / JCM 13017 / BCRC 16820 / KCTC 9966 / NRRL B-24157 / PYR-1) (Mycobacterium vanbaalenii).